The chain runs to 953 residues: 26S proteasome non-ATPase regulatory subunit 1 (953 aa).

At M1 the chain carries N-acetylmethionine. The residue at position 273 (T273) is a Phosphothreonine. Positions 279 to 318 (PGSTNTGTVPGSEKDSDSMETEEKTSSAFVGKTPEASPEP) are disordered. A Phosphoserine modification is found at S290. A compositionally biased stretch (basic and acidic residues) spans 290-303 (SEKDSDSMETEEKT). The residue at position 310 (K310) is an N6-acetyllysine. Residue T311 is modified to Phosphothreonine. At S315 the chain carries Phosphoserine. 10 PC repeats span residues 403–436 (TATA…PGSA), 441–474 (GGLY…DIVR), 476–510 (GGSL…VTGE), 511–545 (AAGL…EKIL), 547–580 (GLAV…ILRR), 581–616 (SGMY…DVRR), 617–649 (AAVE…PHVR), 651–685 (GAAM…YVRQ), 686–726 (GALI…DVMA), and 729–761 (GAIL…PSVV). N6-acetyllysine is present on K720. Residue T830 is modified to Phosphothreonine. S834 is modified (phosphoserine). Disordered regions lie at residues 839-881 (AKKK…LDNP) and 930-953 (AHGP…YIDD). Basic and acidic residues-rich tracts occupy residues 842 to 852 (KEKEKEKKEEE) and 859 to 872 (AEKK…KEPE). The span at 936 to 953 (EEEEQEPEPPEPFEYIDD) shows a compositional bias: acidic residues.

Belongs to the proteasome subunit S1 family. In terms of assembly, component of the 19S proteasome regulatory particle complex. The 26S proteasome consists of a 20S core particle (CP) and two 19S regulatory subunits (RP). The regulatory particle is made of a lid composed of 9 subunits, a base containing 6 ATPases and few additional components including PSMD1. Interacts with ADRM1. Interacts with ZFAND1.

In terms of biological role, component of the 26S proteasome, a multiprotein complex involved in the ATP-dependent degradation of ubiquitinated proteins. This complex plays a key role in the maintenance of protein homeostasis by removing misfolded or damaged proteins, which could impair cellular functions, and by removing proteins whose functions are no longer required. Therefore, the proteasome participates in numerous cellular processes, including cell cycle progression, apoptosis, or DNA damage repair. The chain is 26S proteasome non-ATPase regulatory subunit 1 (PSMD1) from Homo sapiens (Human).